Consider the following 280-residue polypeptide: Para-Rep C2 (280 aa).

A CRESS-DNA virus Rep endonuclease domain is found at 1-97 (MARRYCFTLN…ETLISEIGIP (97 aa)). The RCR-1 motif lies at 6–9 (CFTL). Residues Glu-37 and His-45 each coordinate a divalent metal cation. The short motif at 45 to 47 (HLQ) is the RCR-2 element. Residues 54-75 (NKIRLGGLKKKFGNRAHWEIAR) carry the Nuclear localization signal motif. Tyr-84 functions as the For DNA cleavage activity in the catalytic mechanism. An RCR-3 motif is present at residues 84 to 87 (YCCK). Residues 97–103 (PVMKGSN) carry the Nuclear localization signal motif. 172 to 180 (GSDGGEGKT) serves as a coordination point for ATP.

Belongs to the nanoviridea/circoviridae replication-associated protein family. Homooligomer (Potential). Rep binds to repeated DNA motifs (iterons). Mg(2+) is required as a cofactor. It depends on Mn(2+) as a cofactor.

Its subcellular location is the host nucleus. It carries out the reaction ATP + H2O = ADP + phosphate + H(+). Functionally, initiates and terminates the replication only of its own subviral DNA molecule. The closed circular ssDNA genome is first converted to a superhelical dsDNA. Rep binds a specific hairpin at the genome origin of replication. Introduces an endonucleolytic nick within the intergenic region of the genome, thereby initiating the rolling circle replication (RCR). Following cleavage, binds covalently to the 5'-phosphate of DNA as a tyrosyl ester. The cleavage gives rise to a free 3'-OH that serves as a primer for the cellular DNA polymerase. The polymerase synthesizes the (+) strand DNA by rolling circle mechanism. After one round of replication, a Rep-catalyzed nucleotidyl transfer reaction releases a circular single-stranded virus genome, thereby terminating the replication. Displays origin-specific DNA cleavage, nucleotidyl transferase, ATPase and helicase activities. The chain is Para-Rep C2 (C2) from Subterranean clover stunt C2 alphasatellite (SCSC2A).